We begin with the raw amino-acid sequence, 136 residues long: Large ribosomal subunit protein uL16c (136 aa).

This sequence belongs to the universal ribosomal protein uL16 family. In terms of assembly, part of the 50S ribosomal subunit.

It localises to the plastid. The protein resides in the chloroplast. The chain is Large ribosomal subunit protein uL16c from Oryza sativa (Rice).